Reading from the N-terminus, the 383-residue chain is MAKSIKDHLQDALSNIGADNLRRFQSRLGDRKQEPRVRKSTIEKLKDEIDLVDLLVNTFTSDAVSVTVDILRGIKCNAVAEELLENTGQGGVSQPEPPVPEPIPKDPAQLKELKVTPCSQQFKNKILREKGQETYEIKDKSVRKRLALLINNVDFDDKAMKRSGSEKDEENMEKLLKELDYQVVKRPNLSAKEMDEAIRDFAQREEHKYSDSAFVVIMSHGKRDAIMGVHYHRTNNPSDSFPVDNVYRRLNSENCPALRDKPKVILIQACRGGEHGRVWASDGEPDEPIEIEDDDFVHKEKDFISLMSCTPDTKSYRHVQNGTFYVQTLVDVFIKCAHEDHIEELFRKVLRRFEHPNMIGNFKQMACKDRATLPKLFYLFPGL.

Residues 1 to 142 (MAKSIKDHLQ…ETYEIKDKSV (142 aa)) constitute a propeptide that is removed on maturation. Positions 8-81 (HLQDALSNIG…RGIKCNAVAE (74 aa)) constitute a Pyrin domain. The disordered stretch occupies residues 87 to 106 (TGQGGVSQPEPPVPEPIPKD). Residues His-220 and Cys-270 contribute to the active site. A propeptide spanning residues 275–296 (HGRVWASDGEPDEPIEIEDDDF) is cleaved from the precursor.

It belongs to the peptidase C14A family. As to quaternary structure, heterotetramer that consists of two anti-parallel arranged heterodimers, each one formed by a 20 kDa (p20) and a 10 kDa (p10) subunit. Interacts (via pyrin domain) with pycard (via pyrin domain). Interacts with caspb. Component of NLRP1 inflammasomes. Inflammasomes are supramolecular complexes that assemble in the cytosol in response to pathogens and other damage-associated signals and play critical roles in innate immunity and inflammation. The NLRP1 inflammasome is composed of the signal sensor nlrp1, and the adapter pycard (asc), which recruit effector pro-inflammatory caspases caspa and/or caspb. The interaction between nlrp1 and pycard is required for the sequential recruitment of caspa and then caspb. Caspa is preferentially recruited first and this causes the cleavage of pro-il1b into the midformed il1b. This is followed by the recruitment of caspb, which is activated and cleaves the midformed il1b resulting in il1b maturation. Interacts with caiap. In terms of processing, the two subunits are derived from the precursor sequence by an autocatalytic mechanism.

It is found in the inflammasome. The protein resides in the cytoplasm. It carries out the reaction Strict requirement for an Asp residue at position P1 and has a preferred cleavage sequence of Tyr-Val-Ala-Asp-|-.. Functionally, thiol protease which cleaves IL-1 beta (il1b), releasing the mature cytokine which is involved in a variety of inflammatory processes, and mediates apoptosis. Component of the NLRP1 inflammasome, which plays a crucial role in innate immunity and inflammation. In response to pathogens and other damage-associated signals, recruited to the NLRP1 inflammasome in its precursor form. Its subsequent activation causes the cleavage of pro-il1b into the midformed il1b, which then evetually leads to il1b maturation and secretion in the extracellular milieu. Required for the development of the cartilaginous pharyngeal skeleton. The chain is Caspase a from Danio rerio (Zebrafish).